The sequence spans 93 residues: MARSVKKGPFIDDHLMKKITKLNSENQKKPFKTWSRRSTIFPDMVGHTVMVHNGKQFTPVYINENMIGHKLGEFSPTRTFRGHVAGDKKAAKK.

This sequence belongs to the universal ribosomal protein uS19 family.

Protein S19 forms a complex with S13 that binds strongly to the 16S ribosomal RNA. This is Small ribosomal subunit protein uS19 from Leptospira borgpetersenii serovar Hardjo-bovis (strain JB197).